Reading from the N-terminus, the 284-residue chain is Formamidopyrimidine-DNA glycosylase (284 aa).

Pro2 (schiff-base intermediate with DNA) is an active-site residue. Glu3 serves as the catalytic Proton donor. Lys60 serves as the catalytic Proton donor; for beta-elimination activity. DNA is bound by residues His99, Arg118, and Arg163. The segment at 248 to 282 (WVYGRQGQPCRTCGQTIERIKLVGRSTHFCPQCQP) adopts an FPG-type zinc-finger fold. The active-site Proton donor; for delta-elimination activity is the Arg272.

It belongs to the FPG family. In terms of assembly, monomer. Zn(2+) is required as a cofactor.

The catalysed reaction is Hydrolysis of DNA containing ring-opened 7-methylguanine residues, releasing 2,6-diamino-4-hydroxy-5-(N-methyl)formamidopyrimidine.. The enzyme catalyses 2'-deoxyribonucleotide-(2'-deoxyribose 5'-phosphate)-2'-deoxyribonucleotide-DNA = a 3'-end 2'-deoxyribonucleotide-(2,3-dehydro-2,3-deoxyribose 5'-phosphate)-DNA + a 5'-end 5'-phospho-2'-deoxyribonucleoside-DNA + H(+). In terms of biological role, involved in base excision repair of DNA damaged by oxidation or by mutagenic agents. Acts as a DNA glycosylase that recognizes and removes damaged bases. Has a preference for oxidized purines, such as 7,8-dihydro-8-oxoguanine (8-oxoG). Has AP (apurinic/apyrimidinic) lyase activity and introduces nicks in the DNA strand. Cleaves the DNA backbone by beta-delta elimination to generate a single-strand break at the site of the removed base with both 3'- and 5'-phosphates. This Acaryochloris marina (strain MBIC 11017) protein is Formamidopyrimidine-DNA glycosylase.